A 137-amino-acid chain; its full sequence is Peptide methionine sulfoxide reductase MsrB (137 aa).

Residues 7–129 (VDDLKENLSE…NSASLSFTDE (123 aa)) form the MsrB domain. Zn(2+) is bound by residues C46, C49, C95, and C98. The active-site Nucleophile is C118.

The protein belongs to the MsrB Met sulfoxide reductase family. The cofactor is Zn(2+).

The enzyme catalyses L-methionyl-[protein] + [thioredoxin]-disulfide + H2O = L-methionyl-(R)-S-oxide-[protein] + [thioredoxin]-dithiol. This is Peptide methionine sulfoxide reductase MsrB from Escherichia fergusonii (strain ATCC 35469 / DSM 13698 / CCUG 18766 / IAM 14443 / JCM 21226 / LMG 7866 / NBRC 102419 / NCTC 12128 / CDC 0568-73).